The sequence spans 152 residues: Ribosome maturation factor RimP (152 aa).

It belongs to the RimP family.

It is found in the cytoplasm. In terms of biological role, required for maturation of 30S ribosomal subunits. This Yersinia enterocolitica serotype O:8 / biotype 1B (strain NCTC 13174 / 8081) protein is Ribosome maturation factor RimP.